The chain runs to 510 residues: Hepatic triacylglycerol lipase (510 aa).

The N-terminal stretch at 1–21 (MGNPLQISIFLVFCIFIQSSA) is a signal peptide. Asn-79 carries N-linked (GlcNAc...) asparagine glycosylation. Ser-169 acts as the Nucleophile in catalysis. Asp-195 (charge relay system) is an active-site residue. The segment at 255–278 (CHFLELYKHIAEHGLNAITQTIKC) is essential for determining substrate specificity. His-280 (charge relay system) is an active-site residue. The 135-residue stretch at 353–487 (YHYQFKIQFI…HPSQEKVFVN (135 aa)) folds into the PLAT domain. N-linked (GlcNAc...) asparagine glycosylation is present at Asn-398.

Belongs to the AB hydrolase superfamily. Lipase family. Homodimer.

It localises to the secreted. It catalyses the reaction a triacylglycerol + H2O = a diacylglycerol + a fatty acid + H(+). The enzyme catalyses a 1-acyl-sn-glycero-3-phosphocholine + H2O = sn-glycerol 3-phosphocholine + a fatty acid + H(+). It carries out the reaction a 1,2-diacyl-sn-glycero-3-phosphocholine + H2O = a 2-acyl-sn-glycero-3-phosphocholine + a fatty acid + H(+). The catalysed reaction is 1,2,3-tri-(9Z-octadecenoyl)-glycerol + H2O = di-(9Z)-octadecenoylglycerol + (9Z)-octadecenoate + H(+). It catalyses the reaction 1,2-di-(9Z-octadecenoyl)-sn-glycero-3-phosphocholine + H2O = (9Z-octadecenoyl)-sn-glycero-3-phosphocholine + (9Z)-octadecenoate + H(+). The enzyme catalyses 1,2,3-tributanoylglycerol + H2O = dibutanoylglycerol + butanoate + H(+). It carries out the reaction 1,2-dihexadecanoyl-sn-glycero-3-phosphocholine + H2O = hexadecanoyl-sn-glycero-3-phosphocholine + hexadecanoate + H(+). The catalysed reaction is 1,2-di-(9Z-octadecenoyl)-sn-glycerol + H2O = 2-(9Z-octadecenoyl)-glycerol + (9Z)-octadecenoate + H(+). It catalyses the reaction 1,2,3-tri-(9Z-octadecenoyl)-glycerol + H2O = 2,3-di-(9Z)-octadecenoyl-sn-glycerol + (9Z)-octadecenoate + H(+). The enzyme catalyses 1-(9Z-octadecenoyl)-sn-glycero-3-phospho-L-serine + H2O = sn-glycero-3-phospho-L-serine + (9Z)-octadecenoate + H(+). It carries out the reaction 1-hexadecanoyl-sn-glycero-3-phosphocholine + H2O = sn-glycerol 3-phosphocholine + hexadecanoate + H(+). The catalysed reaction is 1,3-di-(9Z-octadecenoyl)-glycerol + H2O = 3-(9Z-octadecenoyl)-sn-glycerol + (9Z)-octadecenoate + H(+). In terms of biological role, catalyzes the hydrolysis of triglycerides and phospholipids present in circulating plasma lipoproteins, including chylomicrons, intermediate density lipoproteins (IDL), low density lipoproteins (LDL) of large size and high density lipoproteins (HDL), releasing free fatty acids (FFA) and smaller lipoprotein particles. Also exhibits lysophospholipase activity. Can hydrolyze both neutral lipid and phospholipid substrates but shows a greater binding affinity for neutral lipid substrates than phospholipid substrates. In native LDL, preferentially hydrolyzes the phosphatidylcholine species containing polyunsaturated fatty acids at sn-2 position. The protein is Hepatic triacylglycerol lipase (Lipc) of Mus musculus (Mouse).